A 124-amino-acid chain; its full sequence is MADLAKIVEDLSSLTVLEAAELSKLLEEKWGVSAAAPVAVAAAGGGAAAVVEEEKTEFDVILTDAGANKINVIKEVRAITGLGLKEAKDLVEGAPKAVKEAVSKAEAADLKKKLEDAGAKVDVK.

It belongs to the bacterial ribosomal protein bL12 family. As to quaternary structure, homodimer. Part of the ribosomal stalk of the 50S ribosomal subunit. Forms a multimeric L10(L12)X complex, where L10 forms an elongated spine to which 2 to 4 L12 dimers bind in a sequential fashion. Binds GTP-bound translation factors.

In terms of biological role, forms part of the ribosomal stalk which helps the ribosome interact with GTP-bound translation factors. Is thus essential for accurate translation. This chain is Large ribosomal subunit protein bL12, found in Allorhizobium ampelinum (strain ATCC BAA-846 / DSM 112012 / S4) (Agrobacterium vitis (strain S4)).